The sequence spans 20 residues: Cathepsin L1 (20 aa).

The span at 1-10 (AVPDKIDPRE) shows a compositional bias: basic and acidic residues. The segment at 1 to 20 (AVPDKIDPRESGYVTGVKDQ) is disordered.

It belongs to the peptidase C1 family. As to quaternary structure, dimer of a heavy and a light chain linked by disulfide bonds.

The protein resides in the lysosome. The enzyme catalyses Specificity close to that of papain. As compared to cathepsin B, cathepsin L exhibits higher activity toward protein substrates, but has little activity on Z-Arg-Arg-NHMec, and no peptidyl-dipeptidase activity.. Thiol protease that assists the parasite in burrowing through the gut wall and liver of its mammalian host. The protein is Cathepsin L1 of Fasciola hepatica (Liver fluke).